Consider the following 132-residue polypeptide: Phosphoribosyl-AMP cyclohydrolase (132 aa).

Asp-82 provides a ligand contact to Mg(2+). Cys-83 is a binding site for Zn(2+). Residues Asp-84 and Asp-86 each coordinate Mg(2+). 2 residues coordinate Zn(2+): Cys-100 and Cys-107.

This sequence belongs to the PRA-CH family. In terms of assembly, homodimer. Requires Mg(2+) as cofactor. Zn(2+) is required as a cofactor.

The protein resides in the cytoplasm. The catalysed reaction is 1-(5-phospho-beta-D-ribosyl)-5'-AMP + H2O = 1-(5-phospho-beta-D-ribosyl)-5-[(5-phospho-beta-D-ribosylamino)methylideneamino]imidazole-4-carboxamide. The protein operates within amino-acid biosynthesis; L-histidine biosynthesis; L-histidine from 5-phospho-alpha-D-ribose 1-diphosphate: step 3/9. In terms of biological role, catalyzes the hydrolysis of the adenine ring of phosphoribosyl-AMP. The polypeptide is Phosphoribosyl-AMP cyclohydrolase (Dechloromonas aromatica (strain RCB)).